Here is a 185-residue protein sequence, read N- to C-terminus: Ribosome-recycling factor (185 aa).

The protein belongs to the RRF family.

It localises to the cytoplasm. Functionally, responsible for the release of ribosomes from messenger RNA at the termination of protein biosynthesis. May increase the efficiency of translation by recycling ribosomes from one round of translation to another. In Thioalkalivibrio sulfidiphilus (strain HL-EbGR7), this protein is Ribosome-recycling factor.